Consider the following 70-residue polypeptide: Deleted in esophageal cancer 1 (70 aa).

In terms of tissue distribution, expressed in many tissues, with highest expression in prostate and testis. Reduced expression in esophageal carcinomas.

In terms of biological role, candidate tumor suppressor. This chain is Deleted in esophageal cancer 1, found in Homo sapiens (Human).